The chain runs to 292 residues: 33 kDa chaperonin (292 aa).

2 disulfides stabilise this stretch: Cys237–Cys239 and Cys270–Cys273.

It belongs to the HSP33 family. In terms of processing, under oxidizing conditions two disulfide bonds are formed involving the reactive cysteines. Under reducing conditions zinc is bound to the reactive cysteines and the protein is inactive.

The protein localises to the cytoplasm. In terms of biological role, redox regulated molecular chaperone. Protects both thermally unfolding and oxidatively damaged proteins from irreversible aggregation. Plays an important role in the bacterial defense system toward oxidative stress. This chain is 33 kDa chaperonin, found in Lachnoclostridium phytofermentans (strain ATCC 700394 / DSM 18823 / ISDg) (Clostridium phytofermentans).